The following is a 191-amino-acid chain: Gene BABR protein 1 (191 aa).

The protein is Gene BABR protein 1 of Babesia bovis.